The following is a 320-amino-acid chain: ATP-dependent 6-phosphofructokinase isozyme 1 (320 aa).

Gly12 serves as a coordination point for ATP. ADP-binding positions include 22–26 (RGVVR) and 55–60 (RYSVSD). ATP-binding positions include 73 to 74 (RF) and 103 to 106 (GDGS). Asp104 is a Mg(2+) binding site. 126-128 (TID) provides a ligand contact to substrate. The active-site Proton acceptor is the Asp128. Arg155 contributes to the ADP binding site. Residues Arg163 and 170–172 (MGR) contribute to the substrate site. ADP is bound by residues 186–188 (GCE), Lys212, and 214–216 (KKH). Residues Glu223, Arg244, and 250–253 (HIQR) contribute to the substrate site.

This sequence belongs to the phosphofructokinase type A (PFKA) family. ATP-dependent PFK group I subfamily. Prokaryotic clade 'B1' sub-subfamily. Homotetramer. Mg(2+) is required as a cofactor.

Its subcellular location is the cytoplasm. It catalyses the reaction beta-D-fructose 6-phosphate + ATP = beta-D-fructose 1,6-bisphosphate + ADP + H(+). It participates in carbohydrate degradation; glycolysis; D-glyceraldehyde 3-phosphate and glycerone phosphate from D-glucose: step 3/4. Its activity is regulated as follows. Allosterically activated by ADP and other diphosphonucleosides, and allosterically inhibited by phosphoenolpyruvate. Functionally, catalyzes the phosphorylation of D-fructose 6-phosphate to fructose 1,6-bisphosphate by ATP, the first committing step of glycolysis. In Shigella boydii serotype 18 (strain CDC 3083-94 / BS512), this protein is ATP-dependent 6-phosphofructokinase isozyme 1.